Reading from the N-terminus, the 332-residue chain is UDP-galactose/UDP-glucose transporter 1 (332 aa).

The next 8 membrane-spanning stretches (helical) occupy residues 11-31 (ILLLALCISGIWSAYIYQGVL), 49-69 (HLAFLNLAQSVVCLIWSYIMI), 80-100 (APWWTYWSAGITNTIGPAMGI), 112-132 (VLAKSSKMIPVMLMGTLVYGI), 135-155 (TFPEYMCTFLVAGGVSIFALL), 206-226 (IMLGMNLWGTIYNMIYMFGLP), 252-272 (ICGAVGQNFIFMTISNFGSLA), and 301-317 (WGCVSMVFGGLAYQIYL). Positions 327–332 (KKKQKS) match the Di-lysine motif motif.

It belongs to the nucleotide-sugar transporter family. UDP-galactose:UMP antiporter (TC 2.A.7.11) subfamily.

It localises to the endoplasmic reticulum membrane. Essential sugar transporter required for the transport of UDP-galactose and UDP-glucose from the cytoplasm into the Golgi and the endoplasmic reticulum, to ensure quality control of protein folding. Essential for pollen development and involved in embryo sac progress. The chain is UDP-galactose/UDP-glucose transporter 1 from Arabidopsis thaliana (Mouse-ear cress).